Reading from the N-terminus, the 387-residue chain is Calcium sensing receptor, chloroplastic (387 aa).

A chloroplast-targeting transit peptide spans 1–33 (MAMAEMATKSSLSAKLTLPSSSTKKTLSLRQVS). The Lumenal, thylakoid portion of the chain corresponds to 34–186 (VSLPTSTSIS…TMDTISSADP (153 aa)). The helical transmembrane segment at 187–207 (SVIVVAAGAAFLAYLLLPPVF) threads the bilayer. Over 208 to 387 (SAISFNFRGY…SGTKFLPSSD (180 aa)) the chain is Stromal. The Rhodanese domain maps to 231–352 (CTKNYLMVDI…WLQSRLGTDS (122 aa)). Residue Thr380 is modified to Phosphothreonine.

Post-translationally, phosphorylation seems to be light-dependent. Predominantly expressed in the shoot, including guard cells.

Its subcellular location is the plastid. The protein localises to the chloroplast thylakoid membrane. Functionally, modulates cytoplasmic Ca(2+) concentration and is crucial for proper stomatal regulation in response to elevated levels of external Ca(2+). May function by regulating concentrations of inositol 1,4,5-trisphosphate (IP3), which in turn triggers release of Ca(2+) from internal stores. May play a role in de-etiolation. In Arabidopsis thaliana (Mouse-ear cress), this protein is Calcium sensing receptor, chloroplastic (CAS).